The following is a 165-amino-acid chain: Probable bacterial non-heme ferritin-like protein (165 aa).

In terms of domain architecture, Ferritin-like diiron spans 1-145; that stretch reads MLSENVVKLL…SILDKLNFLG (145 aa). Glu-17, Glu-50, His-53, Glu-94, and Gln-127 together coordinate Fe cation.

This sequence belongs to the ferritin family. Prokaryotic subfamily.

The protein localises to the cytoplasm. This chain is Probable bacterial non-heme ferritin-like protein (ftnB), found in Haemophilus influenzae (strain ATCC 51907 / DSM 11121 / KW20 / Rd).